The primary structure comprises 453 residues: Chromosomal replication initiator protein DnaA (453 aa).

The domain I, interacts with DnaA modulators stretch occupies residues 1–78 (MTENEQLFWN…FEIFNAEITA (78 aa)). A domain II region spans residues 78 to 112 (ANYVSNDLHLQETSFSNYQQSSNEVNTLPIRKIDS). The tract at residues 113–331 (NLKEKYTFAN…GALKNISLVA (219 aa)) is domain III, AAA+ region. ATP is bound by residues Gly157, Gly159, Lys160, and Thr161. The tract at residues 332 to 453 (DFKHAKTITV…EIETIKNKIR (122 aa)) is domain IV, binds dsDNA.

This sequence belongs to the DnaA family. Oligomerizes as a right-handed, spiral filament on DNA at oriC.

The protein localises to the cytoplasm. Functionally, plays an essential role in the initiation and regulation of chromosomal replication. ATP-DnaA binds to the origin of replication (oriC) to initiate formation of the DNA replication initiation complex once per cell cycle. Binds the DnaA box (a 9 base pair repeat at the origin) and separates the double-stranded (ds)DNA. Forms a right-handed helical filament on oriC DNA; dsDNA binds to the exterior of the filament while single-stranded (ss)DNA is stabiized in the filament's interior. The ATP-DnaA-oriC complex binds and stabilizes one strand of the AT-rich DNA unwinding element (DUE), permitting loading of DNA polymerase. After initiation quickly degrades to an ADP-DnaA complex that is not apt for DNA replication. Binds acidic phospholipids. The chain is Chromosomal replication initiator protein DnaA from Streptococcus agalactiae serotype Ia (strain ATCC 27591 / A909 / CDC SS700).